Here is a 120-residue protein sequence, read N- to C-terminus: Non-specific lipid-transfer protein 1 (120 aa).

An N-terminal signal peptide occupies residues 1–25; that stretch reads MARSMKLACVALVICMVVIAPMAEA. Cystine bridges form between C29–C78, C39–C55, C56–C101, and C76–C115. F120 is a propeptide.

It belongs to the plant LTP family. Expressed in roots, stem, leaves and tendrils of the mature plant.

Plant non-specific lipid-transfer proteins transfer phospholipids as well as galactolipids across membranes. May play a role in wax or cutin deposition in the cell walls of expanding epidermal cells and certain secretory tissues. Binds saturated and unsaturated lipids, jasmonic acid and lysolipids. Has antifungal activity against A.niger VKM F-2259 (IC(50)=40 uM), F.oxysporum TCXA-4 (IC(50)=20-40), F.solani VKM F-142 (IC(50)=20-40 uM) and N.crassa VKM F-184 (IC(50)=40 uM). Has weak antibacterial activity against A.tumefaciens A281, C.michiganensis VKM Ac-1144 and P.syringae VKM B-1546. The polypeptide is Non-specific lipid-transfer protein 1 (Pisum sativum (Garden pea)).